Here is a 718-residue protein sequence, read N- to C-terminus: Catalase-peroxidase (718 aa).

A disordered region spans residues 1 to 24 (MDQKSDNAGKCPVAHTVPKGRSNR). Residues 95-217 (WHSAGTYRIT…LAAVQMGLIY (123 aa)) constitute a cross-link (tryptophyl-tyrosyl-methioninium (Trp-Tyr) (with M-243)). The Proton acceptor role is filled by H96. A cross-link (tryptophyl-tyrosyl-methioninium (Tyr-Met) (with W-95)) is located at residues 217–243 (YVNPEGPNGNPDPVAAAREIRETFARM). H258 serves as a coordination point for heme b.

The protein belongs to the peroxidase family. Peroxidase/catalase subfamily. Homodimer or homotetramer. Heme b serves as cofactor. Formation of the three residue Trp-Tyr-Met cross-link is important for the catalase, but not the peroxidase activity of the enzyme.

It catalyses the reaction H2O2 + AH2 = A + 2 H2O. The catalysed reaction is 2 H2O2 = O2 + 2 H2O. In terms of biological role, bifunctional enzyme with both catalase and broad-spectrum peroxidase activity. This Sinorhizobium fredii (strain NBRC 101917 / NGR234) protein is Catalase-peroxidase.